The primary structure comprises 281 residues: Transmembrane protein 41A-A (281 aa).

The first 22 residues, 1-22, serve as a signal peptide directing secretion; the sequence is MRSLVGLVAVIVTATFYLYSLS. Residues 32–56 form a disordered region; the sequence is HKQSHEGETTDAKDGDEPSEMETAS. Residues 34-47 are compositionally biased toward basic and acidic residues; that stretch reads QSHEGETTDAKDGD. A run of 5 helical transmembrane segments spans residues 84-104, 107-127, 170-190, 197-217, and 236-256; these read GYVL…AIPG, FLNI…LTCV, LFFF…FLNM, IPVT…NFIC, and WSVV…GALI.

This sequence belongs to the TMEM41 family.

Its subcellular location is the membrane. This Danio rerio (Zebrafish) protein is Transmembrane protein 41A-A (tmem41aa).